We begin with the raw amino-acid sequence, 104 residues long: NADH-quinone oxidoreductase subunit K (104 aa).

3 helical membrane-spanning segments follow: residues 7-27, 31-51, and 63-83; these read PDMAMLLAAGLFALGLLGVLV, LLFMLMSIEIMLNAAALAFVA, and VMFLMILSLAAAEAAIGLAIL.

The protein belongs to the complex I subunit 4L family. As to quaternary structure, NDH-1 is composed of 14 different subunits. Subunits NuoA, H, J, K, L, M, N constitute the membrane sector of the complex.

It localises to the cell inner membrane. The enzyme catalyses a quinone + NADH + 5 H(+)(in) = a quinol + NAD(+) + 4 H(+)(out). Functionally, NDH-1 shuttles electrons from NADH, via FMN and iron-sulfur (Fe-S) centers, to quinones in the respiratory chain. The immediate electron acceptor for the enzyme in this species is believed to be ubiquinone. Couples the redox reaction to proton translocation (for every two electrons transferred, four hydrogen ions are translocated across the cytoplasmic membrane), and thus conserves the redox energy in a proton gradient. This Gluconacetobacter diazotrophicus (strain ATCC 49037 / DSM 5601 / CCUG 37298 / CIP 103539 / LMG 7603 / PAl5) protein is NADH-quinone oxidoreductase subunit K.